The sequence spans 706 residues: Elongation factor G (706 aa).

The 290-residue stretch at 8-297 folds into the tr-type G domain; that stretch reads SYVRNIGIGA…AVVDYLPSPN (290 aa). Residues 17 to 24, 95 to 99, and 149 to 152 contribute to the GTP site; these read AHIDAGKT, DTPGH, and NKMD.

The protein belongs to the TRAFAC class translation factor GTPase superfamily. Classic translation factor GTPase family. EF-G/EF-2 subfamily.

The protein resides in the cytoplasm. Its function is as follows. Catalyzes the GTP-dependent ribosomal translocation step during translation elongation. During this step, the ribosome changes from the pre-translocational (PRE) to the post-translocational (POST) state as the newly formed A-site-bound peptidyl-tRNA and P-site-bound deacylated tRNA move to the P and E sites, respectively. Catalyzes the coordinated movement of the two tRNA molecules, the mRNA and conformational changes in the ribosome. The protein is Elongation factor G of Orientia tsutsugamushi (strain Boryong) (Rickettsia tsutsugamushi).